We begin with the raw amino-acid sequence, 264 residues long: S-adenosylmethionine decarboxylase proenzyme (264 aa).

Residue Ser-112 is the Schiff-base intermediate with substrate; via pyruvic acid of the active site. At Ser-112 the chain carries Pyruvic acid (Ser); by autocatalysis. His-117 (proton acceptor; for processing activity) is an active-site residue. The active-site Proton donor; for catalytic activity is the Cys-140.

It belongs to the prokaryotic AdoMetDC family. Type 2 subfamily. As to quaternary structure, heterooctamer of four alpha and four beta chains arranged as a tetramer of alpha/beta heterodimers. Pyruvate serves as cofactor. Is synthesized initially as an inactive proenzyme. Formation of the active enzyme involves a self-maturation process in which the active site pyruvoyl group is generated from an internal serine residue via an autocatalytic post-translational modification. Two non-identical subunits are generated from the proenzyme in this reaction, and the pyruvate is formed at the N-terminus of the alpha chain, which is derived from the carboxyl end of the proenzyme. The post-translation cleavage follows an unusual pathway, termed non-hydrolytic serinolysis, in which the side chain hydroxyl group of the serine supplies its oxygen atom to form the C-terminus of the beta chain, while the remainder of the serine residue undergoes an oxidative deamination to produce ammonia and the pyruvoyl group blocking the N-terminus of the alpha chain.

The enzyme catalyses S-adenosyl-L-methionine + H(+) = S-adenosyl 3-(methylsulfanyl)propylamine + CO2. It participates in amine and polyamine biosynthesis; S-adenosylmethioninamine biosynthesis; S-adenosylmethioninamine from S-adenosyl-L-methionine: step 1/1. Its function is as follows. Catalyzes the decarboxylation of S-adenosylmethionine to S-adenosylmethioninamine (dcAdoMet), the propylamine donor required for the synthesis of the polyamines spermine and spermidine from the diamine putrescine. The polypeptide is S-adenosylmethionine decarboxylase proenzyme (Photorhabdus laumondii subsp. laumondii (strain DSM 15139 / CIP 105565 / TT01) (Photorhabdus luminescens subsp. laumondii)).